Consider the following 434-residue polypeptide: Nuclear receptor subfamily 1 group I member 2 (434 aa).

Positions 38-107 form a DNA-binding region, nuclear receptor; sequence PQICRVCGDK…RLRKCLESGM (70 aa). 2 consecutive NR C4-type zinc fingers follow at residues 41-61 and 77-102; these read CRVCGDKATGYHFNVMTCEGC and CPFRKGACEITRKTRRQCQACRLRKC. The short motif at 66 to 92 is the Bipartite nuclear localization signal element; that stretch reads RRAMKRNARLRCPFRKGACEITRKTRR. The interval 108–145 is hinge; sequence KKEMIMSDAAVEERRALIKRKKRERIGTQPPGVQGLTE. An NR LBD domain is found at 146-433; that stretch reads EQRMMIRELM…LMQELFGITG (288 aa). Residues Ser247, 285–288, and His407 each bind hyperforin; that span reads QLRF.

This sequence belongs to the nuclear hormone receptor family. NR1 subfamily. Heterodimer with RXRA. Interacts with NCOA1. Interacts (via domain NR LBD) with CRY1 and CRY2 in a ligand-dependent manner.

It localises to the nucleus. Nuclear receptor that binds and is activated by a variety of endogenous and xenobiotic compounds. Transcription factor that activates the transcription of multiple genes involved in the metabolism and secretion of potentially harmful xenobiotics, endogenous compounds and drugs. Response to specific ligands is species-specific, due to differences in the ligand-binding domain. Activated by naturally occurring steroids, such as pregnenolone and progesterone. Binds to a response element in the promoters of the CYP3A4 and ABCB1/MDR1 genes. The chain is Nuclear receptor subfamily 1 group I member 2 (NR1I2) from Macaca mulatta (Rhesus macaque).